Consider the following 454-residue polypeptide: Asparagine--tRNA ligase (454 aa).

Belongs to the class-II aminoacyl-tRNA synthetase family. As to quaternary structure, homodimer.

The protein localises to the cytoplasm. It catalyses the reaction tRNA(Asn) + L-asparagine + ATP = L-asparaginyl-tRNA(Asn) + AMP + diphosphate + H(+). The chain is Asparagine--tRNA ligase from Microcystis aeruginosa (strain NIES-843 / IAM M-2473).